The primary structure comprises 206 residues: Outer-membrane lipoprotein carrier protein (206 aa).

Residues 1-21 (MKKLLCAVLLSPLLYSNAVLA) form the signal peptide.

Belongs to the LolA family. Monomer.

It localises to the periplasm. Participates in the translocation of lipoproteins from the inner membrane to the outer membrane. Only forms a complex with a lipoprotein if the residue after the N-terminal Cys is not an aspartate (The Asp acts as a targeting signal to indicate that the lipoprotein should stay in the inner membrane). The sequence is that of Outer-membrane lipoprotein carrier protein from Shewanella sp. (strain MR-4).